We begin with the raw amino-acid sequence, 1004 residues long: Ovochymase-2 (1004 aa).

The N-terminal stretch at 1–19 (MPTRNLLLGSILLSLAVKG) is a signal peptide. Residues 20–45 (DPGPHRGARCGVSPLGSATELNYLSR) constitute a propeptide, activation peptide. One can recognise a Peptidase S1 1 domain in the interval 46–295 (IVGGRESKKG…LLGWVSSQLN (250 aa)). Cysteine 71 and cysteine 87 are disulfide-bonded. Residue histidine 86 is the Charge relay system of the active site. Glutamate 113 is a binding site for Ca(2+). N-linked (GlcNAc...) asparagine glycosylation occurs at asparagine 128. Catalysis depends on aspartate 136, which acts as the Charge relay system. Cystine bridges form between cysteine 170–cysteine 240, cysteine 201–cysteine 219, and cysteine 230–cysteine 259. Serine 234 serves as the catalytic Charge relay system. CUB domains are found at residues 309–419 (QDGV…YSAV) and 429–541 (CGSF…FTFV). Asparagine 351 carries an N-linked (GlcNAc...) asparagine glycan. The cysteines at positions 363 and 382 are disulfide-linked. A glycan (N-linked (GlcNAc...) asparagine) is linked at asparagine 408. Cystine bridges form between cysteine 429–cysteine 456 and cysteine 483–cysteine 504. Residues 547–558 (VEDSRQGNMPST) are compositionally biased toward polar residues. The segment at 547–566 (VEDSRQGNMPSTNKKETTAQ) is disordered. The 241-residue stretch at 580–820 (IYNSIAKVEE…FIDWIRQIMS (241 aa)) folds into the Peptidase S1 2 domain. A propeptide spans 584-1004 (IAKVEEAVPH…VVPDSDSSEP (421 aa)) (activation peptide). 4 disulfide bridges follow: cysteine 609–cysteine 625, cysteine 706–cysteine 776, cysteine 737–cysteine 754, and cysteine 766–cysteine 796. Asparagine 763 is a glycosylation site (N-linked (GlcNAc...) asparagine). Asparagine 940 is a glycosylation site (N-linked (GlcNAc...) asparagine).

Belongs to the peptidase S1 family. Post-translationally, the catalytically inactive 110 kDa form is processed both N- and C-terminally to give rise to the 66 kDa catalytically active form. In terms of tissue distribution, specifically expressed in the pars recta oviduct.

The protein resides in the secreted. It catalyses the reaction Preferential cleavage at 371-Gly-Ser-Arg-|-Trp-374 of glycoprotein gp43 in Xenopus laevis coelemic egg envelope to yield gp41.. Its function is as follows. Converts the glycoprotein envelope surrounding the egg from an unfertilizable to a fertilizable form during its transit through the pars recta portion of the oviduct by selectively hydrolyzing the envelope glycoprotein gp43. The egg envelope is converted to a sperm-penetrable form, via an increase in sperm binding. The sequence is that of Ovochymase-2 (ovch2) from Xenopus laevis (African clawed frog).